The sequence spans 224 residues: UPF0758 protein PFLU_5982 (224 aa).

The MPN domain maps to 102–224; it reads VLESPKAVRD…PLSMAEYGWL (123 aa). Residues H173, H175, and D186 each contribute to the Zn(2+) site. Positions 173–186 match the JAMM motif motif; sequence HNHPSGSLEPSAAD.

The protein belongs to the UPF0758 family.

This chain is UPF0758 protein PFLU_5982, found in Pseudomonas fluorescens (strain SBW25).